The primary structure comprises 103 residues: Large ribosomal subunit protein bL21 (103 aa).

The protein belongs to the bacterial ribosomal protein bL21 family. As to quaternary structure, part of the 50S ribosomal subunit. Contacts protein L20.

Its function is as follows. This protein binds to 23S rRNA in the presence of protein L20. The sequence is that of Large ribosomal subunit protein bL21 from Bordetella avium (strain 197N).